Reading from the N-terminus, the 211-residue chain is Mediator of RNA polymerase II transcription subunit 20 (211 aa).

It belongs to the Mediator complex subunit 20 family. Component of the Mediator complex.

Its subcellular location is the nucleus. Component of the Mediator complex, a coactivator involved in the regulated transcription of nearly all RNA polymerase II-dependent genes. Mediator functions as a bridge to convey information from gene-specific regulatory proteins to the basal RNA polymerase II transcription machinery. Mediator is recruited to promoters by direct interactions with regulatory proteins and serves as a scaffold for the assembly of a functional preinitiation complex with RNA polymerase II and the general transcription factors. The sequence is that of Mediator of RNA polymerase II transcription subunit 20 (SRB2) from Kluyveromyces lactis (strain ATCC 8585 / CBS 2359 / DSM 70799 / NBRC 1267 / NRRL Y-1140 / WM37) (Yeast).